A 459-amino-acid polypeptide reads, in one-letter code: Phosphomethylpyrimidine synthase (459 aa).

Substrate is bound by residues asparagine 81, methionine 110, tyrosine 140, histidine 176, 196 to 198, 237 to 240, and glutamate 276; these read SRG and DSLR. Histidine 280 lines the Zn(2+) pocket. Tyrosine 303 is a substrate binding site. A Zn(2+)-binding site is contributed by histidine 344. [4Fe-4S] cluster-binding residues include cysteine 424, cysteine 427, and cysteine 432.

The protein belongs to the ThiC family. Requires [4Fe-4S] cluster as cofactor.

The catalysed reaction is 5-amino-1-(5-phospho-beta-D-ribosyl)imidazole + S-adenosyl-L-methionine = 4-amino-2-methyl-5-(phosphooxymethyl)pyrimidine + CO + 5'-deoxyadenosine + formate + L-methionine + 3 H(+). The protein operates within cofactor biosynthesis; thiamine diphosphate biosynthesis. Its function is as follows. Catalyzes the synthesis of the hydroxymethylpyrimidine phosphate (HMP-P) moiety of thiamine from aminoimidazole ribotide (AIR) in a radical S-adenosyl-L-methionine (SAM)-dependent reaction. This Gloeobacter violaceus (strain ATCC 29082 / PCC 7421) protein is Phosphomethylpyrimidine synthase.